Here is a 244-residue protein sequence, read N- to C-terminus: Robin (244 aa).

The polypeptide is Robin (Acanthamoeba polyphaga (Amoeba)).